A 1080-amino-acid chain; its full sequence is DNA polymerase II large subunit (1080 aa).

The protein belongs to the archaeal DNA polymerase II family. As to quaternary structure, heterodimer of a large subunit and a small subunit.

The enzyme catalyses DNA(n) + a 2'-deoxyribonucleoside 5'-triphosphate = DNA(n+1) + diphosphate. It catalyses the reaction Exonucleolytic cleavage in the 3'- to 5'-direction to yield nucleoside 5'-phosphates.. In terms of biological role, possesses two activities: a DNA synthesis (polymerase) and an exonucleolytic activity that degrades single-stranded DNA in the 3'- to 5'-direction. Has a template-primer preference which is characteristic of a replicative DNA polymerase. This is DNA polymerase II large subunit from Picrophilus torridus (strain ATCC 700027 / DSM 9790 / JCM 10055 / NBRC 100828 / KAW 2/3).